The sequence spans 439 residues: tRNA modification GTPase MnmE (439 aa).

(6S)-5-formyl-5,6,7,8-tetrahydrofolate-binding residues include Arg-20, Glu-78, and Lys-116. Positions Gly-211–Glu-364 constitute a TrmE-type G domain. GTP contacts are provided by residues Asn-221 to Thr-226, Ser-240 to Thr-246, and Asp-265 to Gly-268. Mg(2+) is bound by residues Ser-225 and Thr-246. Residue Lys-439 coordinates (6S)-5-formyl-5,6,7,8-tetrahydrofolate.

It belongs to the TRAFAC class TrmE-Era-EngA-EngB-Septin-like GTPase superfamily. TrmE GTPase family. As to quaternary structure, homodimer. Heterotetramer of two MnmE and two MnmG subunits. The cofactor is K(+).

The protein resides in the cytoplasm. In terms of biological role, exhibits a very high intrinsic GTPase hydrolysis rate. Involved in the addition of a carboxymethylaminomethyl (cmnm) group at the wobble position (U34) of certain tRNAs, forming tRNA-cmnm(5)s(2)U34. This Ehrlichia chaffeensis (strain ATCC CRL-10679 / Arkansas) protein is tRNA modification GTPase MnmE.